Consider the following 475-residue polypeptide: Lipoprotein lipase (475 aa).

The signal sequence occupies residues 1-27 (MESKALLLVALGMWFQSLTATRGGVAA). An interaction with GPIHBP1 region spans residues 32–53 (GDFIDIESKFALRTPEDTAEDT). Cysteine 54 and cysteine 67 form a disulfide bridge. The N-linked (GlcNAc...) asparagine glycan is linked to asparagine 70. Tyrosine 121 is modified (3'-nitrotyrosine). Serine 159 serves as the catalytic Nucleophile. The active-site Charge relay system is the aspartate 183. Tyrosine 191 carries the 3'-nitrotyrosine modification. Ca(2+) contacts are provided by alanine 194, arginine 197, serine 199, and aspartate 202. An intrachain disulfide couples cysteine 243 to cysteine 266. Catalysis depends on histidine 268, which acts as the Charge relay system. Intrachain disulfides connect cysteine 291-cysteine 310 and cysteine 302-cysteine 305. One can recognise a PLAT domain in the interval 341-464 (FHYQVKIHFS…KGKASVVFVK (124 aa)). Residue tyrosine 343 is modified to 3'-nitrotyrosine. The N-linked (GlcNAc...) asparagine glycan is linked to asparagine 386. The segment at 417–421 (WSDWW) is important for interaction with lipoprotein particles. Residues 430-434 (KIRVK) are important for heparin binding. The tract at residues 443–467 (IFCSREKVSHLQKGKASVVFVKCHD) is interaction with GPIHBP1. Cysteine 445 and cysteine 465 are disulfide-bonded.

Belongs to the AB hydrolase superfamily. Lipase family. In terms of assembly, homodimer. Interacts with GPIHBP1 with 1:1 stoichiometry. Interacts with APOC2; the interaction activates LPL activity in the presence of lipids. Interaction with heparan sulfate proteoglycans is required to protect LPL against loss of activity. Associates with lipoprotein particles in blood plasma. Interacts with LMF1 and SEL1L; interaction with SEL1L is required to prevent aggregation of newly synthesized LPL in the endoplasmic reticulum (ER), and for normal export of LPL from the ER to the extracellular space. Interacts with SORL1; SORL1 acts as a sorting receptor, promoting LPL localization to endosomes and later to lysosomes, leading to degradation of newly synthesized LPL. In terms of processing, tyrosine nitration after lipopolysaccharide (LPS) challenge down-regulates the lipase activity.

The protein localises to the cell membrane. Its subcellular location is the secreted. The protein resides in the extracellular space. It localises to the extracellular matrix. The catalysed reaction is a triacylglycerol + H2O = a diacylglycerol + a fatty acid + H(+). Its activity is regulated as follows. The apolipoprotein APOC2 acts as a coactivator of LPL activity. Ca(2+) binding promotes protein stability and formation of the active homodimer. Interaction with GPIHBP1 protects LPL against inactivation by ANGPTL4. Key enzyme in triglyceride metabolism. Catalyzes the hydrolysis of triglycerides from circulating chylomicrons and very low density lipoproteins (VLDL), and thereby plays an important role in lipid clearance from the blood stream, lipid utilization and storage. Mediates margination of triglyceride-rich lipoprotein particles in capillaries. Recruited to its site of action on the luminal surface of vascular endothelium by binding to GPIHBP1 and cell surface heparan sulfate proteoglycans. The protein is Lipoprotein lipase (LPL) of Neovison vison (American mink).